The following is a 315-amino-acid chain: tRNA pseudouridine synthase B (315 aa).

The Nucleophile role is filled by aspartate 47.

Belongs to the pseudouridine synthase TruB family. Type 1 subfamily.

It catalyses the reaction uridine(55) in tRNA = pseudouridine(55) in tRNA. In terms of biological role, responsible for synthesis of pseudouridine from uracil-55 in the psi GC loop of transfer RNAs. The sequence is that of tRNA pseudouridine synthase B from Shewanella amazonensis (strain ATCC BAA-1098 / SB2B).